The following is a 143-amino-acid chain: Large ribosomal subunit protein eL28y (143 aa).

Belongs to the eukaryotic ribosomal protein eL28 family.

The protein is Large ribosomal subunit protein eL28y (RPL28C) of Arabidopsis thaliana (Mouse-ear cress).